A 488-amino-acid polypeptide reads, in one-letter code: N-succinylglutamate 5-semialdehyde dehydrogenase (488 aa).

221-226 is an NAD(+) binding site; sequence GSSRTG. Catalysis depends on residues E244 and C278.

It belongs to the aldehyde dehydrogenase family. AstD subfamily.

The catalysed reaction is N-succinyl-L-glutamate 5-semialdehyde + NAD(+) + H2O = N-succinyl-L-glutamate + NADH + 2 H(+). Its pathway is amino-acid degradation; L-arginine degradation via AST pathway; L-glutamate and succinate from L-arginine: step 4/5. Its function is as follows. Catalyzes the NAD-dependent reduction of succinylglutamate semialdehyde into succinylglutamate. The protein is N-succinylglutamate 5-semialdehyde dehydrogenase of Pseudomonas savastanoi pv. phaseolicola (strain 1448A / Race 6) (Pseudomonas syringae pv. phaseolicola (strain 1448A / Race 6)).